The sequence spans 71 residues: UPF0435 protein SERP1418 (71 aa).

It belongs to the UPF0435 family.

This Staphylococcus epidermidis (strain ATCC 35984 / DSM 28319 / BCRC 17069 / CCUG 31568 / BM 3577 / RP62A) protein is UPF0435 protein SERP1418.